We begin with the raw amino-acid sequence, 244 residues long: MDIVVIRDDIYPIFNNEDKIVLLLGNHQEFISNFISKINIHALFYCKYSIIPDEIGTLNVSIIESSHKIRGRYINVEEFISLLYPIQLCSKYTYKNDIDHDTMFIHDIIFFNNTWVRILFIEFLGIIDKQYETCIINPYLVKDNYKIFKNILLASIINNIIFDKNSTLIELINKLYTRYHIDKYIMTCIVKYNDYNNIKLIYHCYNRNKFNAFIYAWFRSQITCDSIEENEKVERMFNNISKRI.

It belongs to the chordopoxvirinae D3 family.

It localises to the virion. Its function is as follows. Late protein which is part of a large complex required for early virion morphogenesis. This complex participates in the formation of virosomes and the incorporation of virosomal contents into nascent immature virions. The protein is 27 kDa core protein of Swinepox virus (strain Swine/Nebraska/17077-99/1999) (SWPV).